The primary structure comprises 291 residues: START domain-containing protein 10 (291 aa).

Residue Met-1 is modified to N-acetylmethionine. The tract at residues Met-1–Gln-23 is disordered. The region spanning Arg-14 to Glu-224 is the START domain. N6-succinyllysine occurs at positions 94, 197, and 202. A phosphoserine mark is found at Ser-253, Ser-259, Ser-284, and Ser-289. The tract at residues Leu-260–Thr-291 is disordered.

In terms of processing, phosphorylation at Ser-284 by CK2 negatively regulates lipid transfer activity, possibly by decreasing membrane association. In terms of tissue distribution, testis, kidney, liver, and intestine with the highest level in the testis.

It is found in the cell projection. The protein resides in the cilium. It localises to the flagellum. The protein localises to the cytoplasm. Its subcellular location is the membrane. Phospholipid transfer protein that preferentially selects lipid species containing a palmitoyl or stearoyl chain on the sn-1 and an unsaturated fatty acyl chain (18:1 or 18:2) on the sn-2 position. Able to transfer phosphatidylcholine (PC) and phosphatidyetanolamline (PE) between membranes. May play metabolic roles in sperm maturation or fertilization. The chain is START domain-containing protein 10 (Stard10) from Mus musculus (Mouse).